Here is a 353-residue protein sequence, read N- to C-terminus: Nicotinate-nucleotide--dimethylbenzimidazole phosphoribosyltransferase (353 aa).

Glu-318 functions as the Proton acceptor in the catalytic mechanism.

It belongs to the CobT family.

The catalysed reaction is 5,6-dimethylbenzimidazole + nicotinate beta-D-ribonucleotide = alpha-ribazole 5'-phosphate + nicotinate + H(+). It functions in the pathway nucleoside biosynthesis; alpha-ribazole biosynthesis; alpha-ribazole from 5,6-dimethylbenzimidazole: step 1/2. Catalyzes the synthesis of alpha-ribazole-5'-phosphate from nicotinate mononucleotide (NAMN) and 5,6-dimethylbenzimidazole (DMB). The polypeptide is Nicotinate-nucleotide--dimethylbenzimidazole phosphoribosyltransferase (Roseiflexus castenholzii (strain DSM 13941 / HLO8)).